A 308-amino-acid chain; its full sequence is Small ribosomal subunit protein uS2 (308 aa).

Position 2 is an N-acetylserine (Ser-2). Laminin-binding stretches follow at residues 161-180 and 205-229; these read IPCN…MLAR and RDPE…EFQG. [DE]-W-[ST] repeat units lie at residues 230–232, 245–247, 279–281, 288–290, and 306–308; these read EWT and DWS. The tract at residues 242–308 is laminin-binding; it reads EVADWSEGVQ…DWGGATADWS (67 aa). The segment at 262 to 308 is disordered; it reads AGIEAPGKPAPAEVYAEDWSAQPATEDWSAAPTAQAGDWGGATADWS.

This sequence belongs to the universal ribosomal protein uS2 family. Monomer (37LRP) and homodimer (67LR). Component of the small ribosomal subunit. Mature ribosomes consist of a small (40S) and a large (60S) subunit. The 40S subunit contains about 33 different proteins and 1 molecule of RNA (18S). The 60S subunit contains about 49 different proteins and 3 molecules of RNA (28S, 5.8S and 5S). Interacts with rps21. Interacts with several laminins including at least lamb1. Interacts with mdk. Acylated. Acylation may be a prerequisite for conversion of the monomeric 37 kDa laminin receptor precursor (37LRP) to the mature dimeric 67 kDa laminin receptor (67LR), and may provide a mechanism for membrane association. Post-translationally, cleaved by stromelysin-3 (ST3) at the cell surface. Cleavage by stromelysin-3 may be a mechanism to alter cell-extracellular matrix interactions.

The protein localises to the cell membrane. The protein resides in the cytoplasm. It localises to the nucleus. In terms of biological role, required for the assembly and/or stability of the 40S ribosomal subunit. Required for the processing of the 20S rRNA-precursor to mature 18S rRNA in a late step of the maturation of 40S ribosomal subunits. Also functions as a cell surface receptor for laminin. Plays a role in cell adhesion to the basement membrane and in the consequent activation of signaling transduction pathways. May play a role in cell fate determination and tissue morphogenesis. The sequence is that of Small ribosomal subunit protein uS2 (rpsa) from Danio rerio (Zebrafish).